The sequence spans 658 residues: Endoglin (658 aa).

Positions 1-25 (MDRGTLPLAVALLLASCSLSPTSLA) are cleaved as a signal peptide. An OR1, N-terminal part region spans residues 26–46 (ETVHCDLQPVGPERGEVTYTT). The tract at residues 26–337 (ETVHCDLQPV…SSCGGRLQTS (312 aa)) is required for interaction with GDF2. Residues 26–586 (ETVHCDLQPV…PDLSGCTSKG (561 aa)) lie on the Extracellular side of the membrane. Cystine bridges form between Cys-30-Cys-207, Cys-53-Cys-182, Cys-242-Cys-330, Cys-350-Cys-382, Cys-363-Cys-442, Cys-394-Cys-412, and Cys-493-Cys-549. Residues 47 to 199 (SQVSKGCVAQ…MGRTLEWRPR (153 aa)) are OR2. N-linked (GlcNAc...) asparagine glycosylation is found at Asn-88, Asn-102, Asn-121, and Asn-134. The segment at 200 to 330 (TPALVRGCHL…SIVSLHASSC (131 aa)) is OR1, C-terminal part. Positions 270 to 282 (QIWTTGEYSFKIF) are essential for interaction with GDF2. An N-linked (GlcNAc...) asparagine glycan is attached at Asn-307. The ZP domain maps to 363 to 533 (CADDAMTLVL…PEGDPRFSFL (171 aa)). The Cell attachment site motif lies at 399–401 (RGD). A helical membrane pass occupies residues 587–611 (LVLPAVLGITFGAFLIGALLTAALW). The Cytoplasmic segment spans residues 612–658 (YIYSHTRSPSKREPVVAVAAPASSESSSTNHSIGSTQSTPCSTSSMA). Low complexity predominate over residues 626–639 (VVAVAAPASSESSS). Positions 626–658 (VVAVAAPASSESSSTNHSIGSTQSTPCSTSSMA) are disordered. Residues 640–658 (TNHSIGSTQSTPCSTSSMA) are compositionally biased toward polar residues. Residues Ser-646 and Ser-649 each carry the phosphoserine; by TGFBR1 modification.

Homodimer; disulfide-linked. Forms a heteromeric complex with the signaling receptors for transforming growth factor-beta: TGFBR1 and/or TGFBR2. It is able to bind TGFB1 and TGFB2 with high affinity, but not TGFB3. Interacts with GDF2, forming a heterotetramer with a 2:2 stoichiometry. Interacts with ACVRL1. Can form a heteromeric complex with GDF2 and ACVRL1. Interacts with BMP10. Interacts with DYNLT4. Interacts with ARRB2. In terms of tissue distribution, detected on umbilical veil endothelial cells. Detected in placenta (at protein level). Detected on endothelial cells.

The protein localises to the cell membrane. Its function is as follows. Vascular endothelium glycoprotein that plays an important role in the regulation of angiogenesis. Required for normal structure and integrity of adult vasculature. Regulates the migration of vascular endothelial cells. Required for normal extraembryonic angiogenesis and for embryonic heart development. May regulate endothelial cell shape changes in response to blood flow, which drive vascular remodeling and establishment of normal vascular morphology during angiogenesis. May play a critical role in the binding of endothelial cells to integrins and/or other RGD receptors. Acts as a TGF-beta coreceptor and is involved in the TGF-beta/BMP signaling cascade that ultimately leads to the activation of SMAD transcription factors. Required for GDF2/BMP9 signaling through SMAD1 in endothelial cells and modulates TGFB1 signaling through SMAD3. This is Endoglin (ENG) from Homo sapiens (Human).